A 185-amino-acid polypeptide reads, in one-letter code: Photosystem I assembly protein Ycf4 (185 aa).

2 consecutive transmembrane segments (helical) span residues 20-40 (GNFF…AVGA) and 57-77 (ILFF…LFIS).

This sequence belongs to the Ycf4 family.

It localises to the plastid. The protein localises to the chloroplast thylakoid membrane. In terms of biological role, seems to be required for the assembly of the photosystem I complex. The polypeptide is Photosystem I assembly protein Ycf4 (Oryza nivara (Indian wild rice)).